Reading from the N-terminus, the 384-residue chain is WAT1-related protein At4g08290 (384 aa).

10 helical membrane passes run 15–35 (LLMI…MATL), 43–63 (VVIV…ALIF), 73–93 (LSVL…DQGF), 104–124 (TYTS…AWIL), 140–160 (IIGT…KGPL), 186–206 (WVVG…FYVL), 219–239 (SLSA…ALVV), 255–275 (FAPL…QGMV), 282–302 (VFVT…ASFI), and 307–327 (IHFG…MVVW). EamA domains are found at residues 25-154 (AGTY…LVMT) and 198-326 (VAWS…YMVV).

The protein belongs to the drug/metabolite transporter (DMT) superfamily. Plant drug/metabolite exporter (P-DME) (TC 2.A.7.4) family.

Its subcellular location is the membrane. In Arabidopsis thaliana (Mouse-ear cress), this protein is WAT1-related protein At4g08290.